The following is a 658-amino-acid chain: Glycogen debranching enzyme (658 aa).

D336 acts as the Nucleophile in catalysis. E371 serves as the catalytic Proton donor. The interval 459–486 is disordered; sequence EANGEENRDGTNSNYSDNNGKEGLGGPL.

The protein belongs to the glycosyl hydrolase 13 family.

The enzyme catalyses Hydrolysis of (1-&gt;6)-alpha-D-glucosidic linkages to branches with degrees of polymerization of three or four glucose residues in limit dextrin.. Its pathway is glycan degradation; glycogen degradation. Its function is as follows. Removes maltotriose and maltotetraose chains that are attached by 1,6-alpha-linkage to the limit dextrin main chain, generating a debranched limit dextrin. The chain is Glycogen debranching enzyme from Salmonella gallinarum (strain 287/91 / NCTC 13346).